The following is a 114-amino-acid chain: Large ribosomal subunit protein uL22 (114 aa).

Belongs to the universal ribosomal protein uL22 family. As to quaternary structure, part of the 50S ribosomal subunit.

In terms of biological role, this protein binds specifically to 23S rRNA; its binding is stimulated by other ribosomal proteins, e.g. L4, L17, and L20. It is important during the early stages of 50S assembly. It makes multiple contacts with different domains of the 23S rRNA in the assembled 50S subunit and ribosome. Functionally, the globular domain of the protein is located near the polypeptide exit tunnel on the outside of the subunit, while an extended beta-hairpin is found that lines the wall of the exit tunnel in the center of the 70S ribosome. The sequence is that of Large ribosomal subunit protein uL22 from Ehrlichia ruminantium (strain Gardel).